The primary structure comprises 259 residues: uncharacterized protein (259 aa).

The protein belongs to the chlamydial CPn_0128/CT_035/TC_0305 family.

This is an uncharacterized protein from Chlamydia muridarum (strain MoPn / Nigg).